The following is a 380-amino-acid chain: Alanine racemase (380 aa).

The active-site Proton acceptor; specific for D-alanine is K34. Residue K34 is modified to N6-(pyridoxal phosphate)lysine. R135 contributes to the substrate binding site. The Proton acceptor; specific for L-alanine role is filled by Y267. Residue M315 coordinates substrate.

It belongs to the alanine racemase family. Pyridoxal 5'-phosphate serves as cofactor.

The enzyme catalyses L-alanine = D-alanine. It functions in the pathway amino-acid biosynthesis; D-alanine biosynthesis; D-alanine from L-alanine: step 1/1. In terms of biological role, catalyzes the interconversion of L-alanine and D-alanine. May also act on other amino acids. The chain is Alanine racemase (alr) from Lawsonia intracellularis (strain PHE/MN1-00).